Consider the following 422-residue polypeptide: Putative acid phosphatase 5 (422 aa).

Positions 1 to 13 are cleaved as a signal peptide; that stretch reads MLLLLVLLIGASG. His40 (nucleophile) is an active-site residue. N-linked (GlcNAc...) asparagine glycans are attached at residues Asn104, Asn210, and Asn218. 3 disulfide bridges follow: Cys152–Cys363, Cys205–Cys302, and Cys338–Cys342. The active-site Proton donor is the Asp279. 2 N-linked (GlcNAc...) asparagine glycosylation sites follow: Asn312 and Asn323.

This sequence belongs to the histidine acid phosphatase family.

It catalyses the reaction a phosphate monoester + H2O = an alcohol + phosphate. In Caenorhabditis elegans, this protein is Putative acid phosphatase 5 (pho-5).